The sequence spans 219 residues: Proteasome subunit beta type-9 (219 aa).

A propeptide spans 1-20 (removed in mature form); that stretch reads MLQAGAPTAGSFRTGEVHTG. Residue threonine 21 is the Nucleophile of the active site. Residues lysine 53 and lysine 109 each carry the N6-acetyllysine modification.

This sequence belongs to the peptidase T1B family. In terms of assembly, the 26S proteasome consists of a 20S proteasome core and two 19S regulatory subunits. The 20S proteasome core is composed of 28 subunits that are arranged in four stacked rings, resulting in a barrel-shaped structure. The two end rings are each formed by seven alpha subunits, and the two central rings are each formed by seven beta subunits. The catalytic chamber with the active sites is on the inside of the barrel. Component of the immunoproteasome, where it displaces the equivalent housekeeping subunit PSMB6. Component of the spermatoproteasome, a form of the proteasome specifically found in testis. Interacts with NCOA2 and NCOA3. Autocleaved. The resulting N-terminal Thr residue of the mature subunit is responsible for the nucleophile proteolytic activity. As to expression, detected in the cytoplasmic lobe of elongated spermatids, in residual bodies, and in the acrosomal cap of round spermatids.

The protein resides in the cytoplasm. The protein localises to the nucleus. The catalysed reaction is Cleavage of peptide bonds with very broad specificity.. Functionally, the proteasome is a multicatalytic proteinase complex which is characterized by its ability to cleave peptides with Arg, Phe, Tyr, Leu, and Glu adjacent to the leaving group at neutral or slightly basic pH. The proteasome has an ATP-dependent proteolytic activity. This subunit is involved in antigen processing to generate class I binding peptides. The polypeptide is Proteasome subunit beta type-9 (Psmb9) (Rattus norvegicus (Rat)).